A 783-amino-acid chain; its full sequence is uncharacterized protein (783 aa).

The segment at 1–22 (MVNTRGYTTLPNVEEPANNSQD) is disordered. The Cytoplasmic portion of the chain corresponds to 1 to 109 (MVNTRGYTTL…SKIGNVMVMR (109 aa)). Residues 110–127 (RIFYIMMMSIIAALIIAS) form a helical; Signal-anchor for type II membrane protein membrane-spanning segment. At 128-783 (DRLPNGKARG…NLHGINTNEF (656 aa)) the chain is on the extracellular side. N-linked (GlcNAc...) asparagine glycosylation is found at asparagine 139 and asparagine 213. The 93-residue stretch at 241 to 333 (HNGQLNNIPV…GTGDALTPEW (93 aa)) folds into the PA domain. N-linked (GlcNAc...) asparagine glycosylation occurs at asparagine 529.

It is found in the cell membrane. This is an uncharacterized protein from Saccharomyces cerevisiae (strain ATCC 204508 / S288c) (Baker's yeast).